Reading from the N-terminus, the 122-residue chain is Ribosome-binding factor A (122 aa).

This sequence belongs to the RbfA family. As to quaternary structure, monomer. Binds 30S ribosomal subunits, but not 50S ribosomal subunits or 70S ribosomes.

The protein resides in the cytoplasm. One of several proteins that assist in the late maturation steps of the functional core of the 30S ribosomal subunit. Associates with free 30S ribosomal subunits (but not with 30S subunits that are part of 70S ribosomes or polysomes). Required for efficient processing of 16S rRNA. May interact with the 5'-terminal helix region of 16S rRNA. The protein is Ribosome-binding factor A of Caldanaerobacter subterraneus subsp. tengcongensis (strain DSM 15242 / JCM 11007 / NBRC 100824 / MB4) (Thermoanaerobacter tengcongensis).